The chain runs to 287 residues: Bifunctional protein FolD (287 aa).

Residues 160–162 (GRS), serine 189, and isoleucine 230 each bind NADP(+).

The protein belongs to the tetrahydrofolate dehydrogenase/cyclohydrolase family. As to quaternary structure, homodimer.

It catalyses the reaction (6R)-5,10-methylene-5,6,7,8-tetrahydrofolate + NADP(+) = (6R)-5,10-methenyltetrahydrofolate + NADPH. The catalysed reaction is (6R)-5,10-methenyltetrahydrofolate + H2O = (6R)-10-formyltetrahydrofolate + H(+). It functions in the pathway one-carbon metabolism; tetrahydrofolate interconversion. In terms of biological role, catalyzes the oxidation of 5,10-methylenetetrahydrofolate to 5,10-methenyltetrahydrofolate and then the hydrolysis of 5,10-methenyltetrahydrofolate to 10-formyltetrahydrofolate. The chain is Bifunctional protein FolD from Chlamydia felis (strain Fe/C-56) (Chlamydophila felis).